A 407-amino-acid chain; its full sequence is Protein phosphatase methylesterase 1 (407 aa).

A disordered region spans residues 1 to 53; that stretch reads MSDLQKSFAKSKLAKLPPEPPPIPESVADEDDDSGSSTETVTPSPVKQLFARP. Active-site residues include S185, D211, and H342. Positions 388–401 are enriched in gly residues; it reads GAGVPLGKAEGGTT. The tract at residues 388–407 is disordered; the sequence is GAGVPLGKAEGGTTGSFKRS.

Belongs to the AB hydrolase superfamily.

It carries out the reaction [phosphatase 2A protein]-C-terminal L-leucine methyl ester + H2O = [phosphatase 2A protein]-C-terminal L-leucine + methanol + H(+). In terms of biological role, demethylates proteins that have been reversibly carboxymethylated. Demethylates the phosphatase PP2A catalytic subunit. This is Protein phosphatase methylesterase 1 (ppe1) from Emericella nidulans (strain FGSC A4 / ATCC 38163 / CBS 112.46 / NRRL 194 / M139) (Aspergillus nidulans).